The chain runs to 389 residues: Succinate--CoA ligase [ADP-forming] subunit beta (389 aa).

The 228-residue stretch at 9–236 (RDMFEAHGVP…KDSADPLEAK (228 aa)) folds into the ATP-grasp domain. ATP-binding positions include lysine 45, 52–54 (GRG), alanine 94, and glutamate 99. Mg(2+)-binding residues include asparagine 191 and aspartate 205. Substrate contacts are provided by residues asparagine 256 and 318–320 (GIT).

This sequence belongs to the succinate/malate CoA ligase beta subunit family. As to quaternary structure, heterotetramer of two alpha and two beta subunits. Mg(2+) serves as cofactor.

The catalysed reaction is succinate + ATP + CoA = succinyl-CoA + ADP + phosphate. It carries out the reaction GTP + succinate + CoA = succinyl-CoA + GDP + phosphate. The protein operates within carbohydrate metabolism; tricarboxylic acid cycle; succinate from succinyl-CoA (ligase route): step 1/1. Functionally, succinyl-CoA synthetase functions in the citric acid cycle (TCA), coupling the hydrolysis of succinyl-CoA to the synthesis of either ATP or GTP and thus represents the only step of substrate-level phosphorylation in the TCA. The beta subunit provides nucleotide specificity of the enzyme and binds the substrate succinate, while the binding sites for coenzyme A and phosphate are found in the alpha subunit. This is Succinate--CoA ligase [ADP-forming] subunit beta from Renibacterium salmoninarum (strain ATCC 33209 / DSM 20767 / JCM 11484 / NBRC 15589 / NCIMB 2235).